An 86-amino-acid chain; its full sequence is Kappa-theraphotoxin-Cg1c (86 aa).

A signal peptide spans 1–21; sequence MKVSVLITLAVLGVMFVWASA. Residues 22-50 constitute a propeptide that is removed on maturation; the sequence is AELEERGSDHRDSPAWLKSMERIFQSEER. Cystine bridges form between cysteine 52–cysteine 66, cysteine 59–cysteine 71, and cysteine 65–cysteine 78.

This sequence belongs to the neurotoxin 10 (Hwtx-1) family. 28 (Jztx-11) subfamily. Expressed by the venom gland.

It is found in the secreted. Probable ion channel inhibitor. The polypeptide is Kappa-theraphotoxin-Cg1c (Chilobrachys guangxiensis (Chinese earth tiger tarantula)).